A 354-amino-acid polypeptide reads, in one-letter code: NAD-dependent epimerase/dehydratase ALT6 (354 aa).

NADP(+)-binding residues include Lys-41 and Tyr-174.

The protein belongs to the NAD(P)-dependent epimerase/dehydratase family. Dihydroflavonol-4-reductase subfamily.

It participates in mycotoxin biosynthesis. Functionally, NAD-dependent epimerase/dehydratase; part of the gene cluster that mediates the biosynthesis of the host-selective toxins (HSTs) AAL-toxins, sphinganine-analog mycotoxins responsible for Alternaria stem canker on tomato by the tomato pathotype. The biosynthesis starts with the polyketide synthase ALT1-catalyzed C-16 carbon chain assembly from one starter acetyl-CoA unit with malonyl-CoA extender units. ALT1 also selectively transfers methyl groups at the first and the third cycle of chain elongation for AAL toxin. The C-16 polyketide chain is released from the enzyme by a nucleophilic attack of a carbanion, which is derived from R-carbon of glycin by decarboxylation, on the carbonyl carbon of polyketide acyl chain. This step is probably catalyzed by a pyridoxal 5'-phosphate-dependent aminoacyl transferase ALT4. The respective functions of the other enzymes encoded by the cluster have still to be elucidated. The sphingosine N-acyltransferase-like protein ALT7 seems not to act as a resistance/self-tolerance factor against the toxin in the toxin biosynthetic gene cluster, contrary to what is expected. This chain is NAD-dependent epimerase/dehydratase ALT6, found in Alternaria alternata (Alternaria rot fungus).